A 218-amino-acid polypeptide reads, in one-letter code: ATP phosphoribosyltransferase (218 aa).

This sequence belongs to the ATP phosphoribosyltransferase family. Short subfamily. Heteromultimer composed of HisG and HisZ subunits.

The protein localises to the cytoplasm. It catalyses the reaction 1-(5-phospho-beta-D-ribosyl)-ATP + diphosphate = 5-phospho-alpha-D-ribose 1-diphosphate + ATP. It participates in amino-acid biosynthesis; L-histidine biosynthesis; L-histidine from 5-phospho-alpha-D-ribose 1-diphosphate: step 1/9. Catalyzes the condensation of ATP and 5-phosphoribose 1-diphosphate to form N'-(5'-phosphoribosyl)-ATP (PR-ATP). Has a crucial role in the pathway because the rate of histidine biosynthesis seems to be controlled primarily by regulation of HisG enzymatic activity. This is ATP phosphoribosyltransferase from Lactiplantibacillus plantarum (strain ATCC BAA-793 / NCIMB 8826 / WCFS1) (Lactobacillus plantarum).